We begin with the raw amino-acid sequence, 789 residues long: Spermatogenesis-associated protein 20 (789 aa).

Positions 1–19 (MSHHSPPPPKHKGEHKGHG) are enriched in basic residues. The segment at 1 to 65 (MSHHSPPPPK…CPPPAPQKTA (65 aa)) is disordered. A phosphoserine mark is found at S5 and S652.

As to expression, testis-specific and age-dependent (at protein level). Highly expressed. Expressed in round spermatids located in the inner half-layer of the seminiferous epithelium as well as in early elongated spermatids having cytoplasmic protrusions into the tubular lumen.

The protein localises to the secreted. In terms of biological role, may play a role in fertility regulation. In Rattus norvegicus (Rat), this protein is Spermatogenesis-associated protein 20 (Spata20).